A 255-amino-acid polypeptide reads, in one-letter code: Indole-3-glycerol phosphate synthase (255 aa).

Belongs to the TrpC family.

The enzyme catalyses 1-(2-carboxyphenylamino)-1-deoxy-D-ribulose 5-phosphate + H(+) = (1S,2R)-1-C-(indol-3-yl)glycerol 3-phosphate + CO2 + H2O. The protein operates within amino-acid biosynthesis; L-tryptophan biosynthesis; L-tryptophan from chorismate: step 4/5. This chain is Indole-3-glycerol phosphate synthase, found in Streptococcus pneumoniae (strain Taiwan19F-14).